The chain runs to 126 residues: uncharacterized protein (126 aa).

At T68 the chain carries Phosphothreonine.

This is an uncharacterized protein from Pseudomonas aeruginosa (strain UCBPP-PA14).